The following is a 455-amino-acid chain: GTPase Der (455 aa).

EngA-type G domains are found at residues 4–174 and 183–358; these read PIVA…PAGQ and LKIA…SERN. GTP contacts are provided by residues 10–17, 57–61, 126–129, 189–196, 236–240, and 301–304; these read GRPNVGKS, DTAGL, NKAD, DTAGI, and NKWD. The KH-like domain maps to 359 to 444; that stretch reads KRVSTSDINN…PIILVFKGRE (86 aa).

The protein belongs to the TRAFAC class TrmE-Era-EngA-EngB-Septin-like GTPase superfamily. EngA (Der) GTPase family. As to quaternary structure, associates with the 50S ribosomal subunit.

Functionally, GTPase that plays an essential role in the late steps of ribosome biogenesis. The chain is GTPase Der from Herpetosiphon aurantiacus (strain ATCC 23779 / DSM 785 / 114-95).